Here is a 204-residue protein sequence, read N- to C-terminus: Ribosome maturation factor RimP (204 aa).

The protein belongs to the RimP family.

The protein localises to the cytoplasm. In terms of biological role, required for maturation of 30S ribosomal subunits. The sequence is that of Ribosome maturation factor RimP from Albidiferax ferrireducens (strain ATCC BAA-621 / DSM 15236 / T118) (Rhodoferax ferrireducens).